Reading from the N-terminus, the 384-residue chain is MFRYLTSGESHGEGLYVILEGVPAGLKVDLDYINHELSRRQLGYGRGERMKIEKDEAQILTGVRGGFATGAPITIKVKNRDYENWEKFMRTTGEIEPGREVTVPRPGHADLAGGLKYGHKDLRNVLERASARETAVRVAAGAVAKLFLAEFGVRIYSHVLRIGSVEVEYPGGLPEEELKKADEHPLRCLDAQVEGRMLKWVDRARENGDTLGGIFEVVVFGLPPGLGSYVHWDRKLDGRLAGALMAIPSAKGVEIGDGIALANIPGRMAVDEIYYENGHFYRKTNKAGGLEGGVTNGMPLIAKVSLKPIPTQVKPLKSVDIVTKETKPAQVERSDITAVPAAGVVGEAVTALVLMESFLEKFGGDRIEETKRNYQNYLQSIANY.

Positions 40 and 46 each coordinate NADP(+). Residues 128-130 (RAS), G292, 307-311 (KPIPT), and R333 each bind FMN.

It belongs to the chorismate synthase family. In terms of assembly, homotetramer. The cofactor is FMNH2.

It carries out the reaction 5-O-(1-carboxyvinyl)-3-phosphoshikimate = chorismate + phosphate. It functions in the pathway metabolic intermediate biosynthesis; chorismate biosynthesis; chorismate from D-erythrose 4-phosphate and phosphoenolpyruvate: step 7/7. Its function is as follows. Catalyzes the anti-1,4-elimination of the C-3 phosphate and the C-6 proR hydrogen from 5-enolpyruvylshikimate-3-phosphate (EPSP) to yield chorismate, which is the branch point compound that serves as the starting substrate for the three terminal pathways of aromatic amino acid biosynthesis. This reaction introduces a second double bond into the aromatic ring system. This chain is Chorismate synthase, found in Carboxydothermus hydrogenoformans (strain ATCC BAA-161 / DSM 6008 / Z-2901).